Here is a 374-residue protein sequence, read N- to C-terminus: Anhydro-N-acetylmuramic acid kinase (374 aa).

12 to 19 (GTSLDGID) contributes to the ATP binding site.

The protein belongs to the anhydro-N-acetylmuramic acid kinase family.

The catalysed reaction is 1,6-anhydro-N-acetyl-beta-muramate + ATP + H2O = N-acetyl-D-muramate 6-phosphate + ADP + H(+). The protein operates within amino-sugar metabolism; 1,6-anhydro-N-acetylmuramate degradation. Its pathway is cell wall biogenesis; peptidoglycan recycling. Functionally, catalyzes the specific phosphorylation of 1,6-anhydro-N-acetylmuramic acid (anhMurNAc) with the simultaneous cleavage of the 1,6-anhydro ring, generating MurNAc-6-P. Is required for the utilization of anhMurNAc either imported from the medium or derived from its own cell wall murein, and thus plays a role in cell wall recycling. The polypeptide is Anhydro-N-acetylmuramic acid kinase (Klebsiella pneumoniae subsp. pneumoniae (strain ATCC 700721 / MGH 78578)).